The chain runs to 237 residues: Proteasome subunit beta type-1-B (237 aa).

The protein belongs to the peptidase T1B family. The 26S proteasome consists of a 20S proteasome core and two 19S regulatory subunits. The 20S proteasome core is composed of 28 subunits that are arranged in four stacked rings, resulting in a barrel-shaped structure. The two end rings are each formed by seven alpha subunits, and the two central rings are each formed by seven beta subunits. The catalytic chamber with the active sites is on the inside of the barrel.

The protein resides in the cytoplasm. It is found in the nucleus. Its function is as follows. Non-catalytic component of the proteasome, a multicatalytic proteinase complex which is characterized by its ability to cleave peptides with Arg, Phe, Tyr, Leu, and Glu adjacent to the leaving group at neutral or slightly basic pH. The proteasome has an ATP-dependent proteolytic activity. The sequence is that of Proteasome subunit beta type-1-B (psmb1-B) from Carassius auratus (Goldfish).